A 193-amino-acid polypeptide reads, in one-letter code: dCTP deaminase (193 aa).

Residues 110–115, Asp128, 136–138, Tyr171, Lys178, and Gln182 each bind dCTP; these read RSSLAR and VLE. Glu138 acts as the Proton donor/acceptor in catalysis. The disordered stretch occupies residues 170 to 193; it reads PYNSRQDAKYRGQQGAVASRIDKD.

It belongs to the dCTP deaminase family. As to quaternary structure, homotrimer.

It catalyses the reaction dCTP + H2O + H(+) = dUTP + NH4(+). It participates in pyrimidine metabolism; dUMP biosynthesis; dUMP from dCTP (dUTP route): step 1/2. In terms of biological role, catalyzes the deamination of dCTP to dUTP. The protein is dCTP deaminase of Yersinia enterocolitica serotype O:8 / biotype 1B (strain NCTC 13174 / 8081).